A 702-amino-acid polypeptide reads, in one-letter code: Ribosomal RNA large subunit methyltransferase K/L (702 aa).

One can recognise a THUMP domain in the interval 43–154 (LVYQSLMWSR…KETASIALDL (112 aa)).

Belongs to the methyltransferase superfamily. RlmKL family.

The protein resides in the cytoplasm. The enzyme catalyses guanosine(2445) in 23S rRNA + S-adenosyl-L-methionine = N(2)-methylguanosine(2445) in 23S rRNA + S-adenosyl-L-homocysteine + H(+). It carries out the reaction guanosine(2069) in 23S rRNA + S-adenosyl-L-methionine = N(2)-methylguanosine(2069) in 23S rRNA + S-adenosyl-L-homocysteine + H(+). Functionally, specifically methylates the guanine in position 2445 (m2G2445) and the guanine in position 2069 (m7G2069) of 23S rRNA. This is Ribosomal RNA large subunit methyltransferase K/L from Escherichia coli O139:H28 (strain E24377A / ETEC).